The chain runs to 156 residues: Small ribosomal subunit protein uS7 (156 aa).

It belongs to the universal ribosomal protein uS7 family. As to quaternary structure, part of the 30S ribosomal subunit. Contacts proteins S9 and S11.

Functionally, one of the primary rRNA binding proteins, it binds directly to 16S rRNA where it nucleates assembly of the head domain of the 30S subunit. Is located at the subunit interface close to the decoding center, probably blocks exit of the E-site tRNA. This Mycobacterium avium (strain 104) protein is Small ribosomal subunit protein uS7.